The chain runs to 262 residues: Encapsulin nanocompartment protein Rv1762c (262 aa).

The protein belongs to the UPF0145 family.

It is found in the encapsulin nanocompartment. Functionally, cargo protein of a type 1 encapsulin nanocompartment possibly involved in protection against oxidative stress. This Mycobacterium tuberculosis (strain ATCC 25618 / H37Rv) protein is Encapsulin nanocompartment protein Rv1762c.